A 132-amino-acid polypeptide reads, in one-letter code: Large ribosomal subunit protein uL14 (132 aa).

It belongs to the universal ribosomal protein uL14 family. Part of the 50S ribosomal subunit. Forms a cluster with proteins L3 and L24e, part of which may contact the 16S rRNA in 2 intersubunit bridges.

Functionally, binds to 23S rRNA. Forms part of two intersubunit bridges in the 70S ribosome. This Thermoplasma acidophilum (strain ATCC 25905 / DSM 1728 / JCM 9062 / NBRC 15155 / AMRC-C165) protein is Large ribosomal subunit protein uL14.